Consider the following 168-residue polypeptide: RNA pyrophosphohydrolase (168 aa).

Residues Pro8–Arg160 enclose the Nudix hydrolase domain. The Nudix box signature appears at Gly47–Ser68.

Belongs to the Nudix hydrolase family. RppH subfamily. A divalent metal cation is required as a cofactor.

Accelerates the degradation of transcripts by removing pyrophosphate from the 5'-end of triphosphorylated RNA, leading to a more labile monophosphorylated state that can stimulate subsequent ribonuclease cleavage. The chain is RNA pyrophosphohydrolase from Azorhizobium caulinodans (strain ATCC 43989 / DSM 5975 / JCM 20966 / LMG 6465 / NBRC 14845 / NCIMB 13405 / ORS 571).